Consider the following 464-residue polypeptide: Alpha-2A adrenergic receptor (464 aa).

The Extracellular segment spans residues 1–47 (MFRQEQRWPRQLWPMGSLQPDSGNASWNGTEGPGGGTRATPYSLQVT). The disordered stretch occupies residues 13 to 34 (WPMGSLQPDSGNASWNGTEGPG). The segment covering 19 to 29 (QPDSGNASWNG) has biased composition (polar residues). 2 N-linked (GlcNAc...) asparagine glycosylation sites follow: Asn24 and Asn28. Residues 48–73 (VTLVCLVGLLILLTVFGNVLVIIAVF) form a helical membrane-spanning segment. Residues 74 to 84 (TSRALKAPQNL) lie on the Cytoplasmic side of the membrane. Residues 85-110 (FLVSLASADILVATLVIPFSLANEVM) form a helical membrane-spanning segment. Residues 111 to 120 (GYWYFGKAWC) are Extracellular-facing. The cysteines at positions 120 and 201 are disulfide-linked. The helical transmembrane segment at 121-143 (EIYLALDVLFCTSSIVHLCAISL) threads the bilayer. The Cytoplasmic portion of the chain corresponds to 144–163 (DRYWSITQAIEYNLKRTPRR). The chain crosses the membrane as a helical span at residues 164–187 (IKAIIVTVWVISAVISFPPLISFE). The Extracellular segment spans residues 188–206 (KAGGGGQQPAEPRCEINDQ). Residues 207–231 (KWYVISSSIGSFFAPCLIMILVYVR) traverse the membrane as a helical segment. Residues 232–388 (IYQIAKRRTR…RQNREKRFTF (157 aa)) are Cytoplasmic-facing. A disordered region spans residues 240–378 (TRVPPSRRGP…GGAKASRWRG (139 aa)). Positions 251-268 (AHAAAPPGGAERRPNGLG) are enriched in low complexity. Residues 312–329 (SSEHAERPPGARRPERGL) are compositionally biased toward basic and acidic residues. Position 345 is a phosphoserine (Ser345). A compositionally biased stretch (gly residues) spans 354–363 (AGSGTSGSGP). Arg367 carries the post-translational modification Omega-N-methylarginine. The helical transmembrane segment at 389–413 (VLAVVIGVFVVCWFPFFFTYTLTAV) threads the bilayer. Residues 414-423 (GCSVPRTLFK) lie on the Extracellular side of the membrane. The chain crosses the membrane as a helical span at residues 424–444 (FFFWFGYCNSSLNPVIYTIFN). The Cytoplasmic segment spans residues 445 to 464 (HDFRRAFKKILCRGDRKRIV). The S-palmitoyl cysteine moiety is linked to residue Cys456.

This sequence belongs to the G-protein coupled receptor 1 family. Adrenergic receptor subfamily. ADRA2A sub-subfamily. Component of the ADA2A-containing complex (ATAC), composed of KAT14, KAT2A, TADA2L, TADA3L, ZZ3, MBIP, WDR5, YEATS2, CCDC101 and DR1.

It is found in the cell membrane. Alpha-2 adrenergic receptors mediate the catecholamine-induced inhibition of adenylate cyclase through the action of G proteins. Component of the ATAC complex, a complex with histone acetyltransferase activity on histones H3 and H4. This Cavia porcellus (Guinea pig) protein is Alpha-2A adrenergic receptor.